The following is a 283-amino-acid chain: MDSRFVTYFASAISASVLVTTIFVCWNVTHDLNTLQAMSDRNMQDFKAISDRTWDKMMFKQQSSPPSPSLIFGRNKRSGDKCNCSEEPSNCPGGPPGPPGEKGNDGVDGVDGIPGFPGENGGAALDQPADGTCIKCPPGPRGPPGPQGEEGPSGDVGEDGEPGVPGNDGADGTPGKSGAPGGKGPQGPPGTPGRPGQPGRKAIGEAGPKGPPGAPGTDGRRGENGTDGDDGVDGQPGDEGDAGKDGTPGEPGPQGEQGTEGQPGTDGAYCPCPARSISKVAIQ.

Residues 59-283 (FKQQSSPPSP…ARSISKVAIQ (225 aa)) are disordered. Triple-helical region regions lie at residues 94-122 (GPPGPPGEKGNDGVDGVDGIPGFPGENGG), 139-201 (GPRG…PGRK), and 204-269 (GEAG…DGAY). Over residues 137 to 146 (PPGPRGPPGP) the composition is skewed to pro residues. Acidic residues predominate over residues 226–240 (TDGDDGVDGQPGDEG). The span at 253-265 (PQGEQGTEGQPGT) shows a compositional bias: low complexity.

This sequence belongs to the cuticular collagen family. In terms of assembly, collagen polypeptide chains are complexed within the cuticle by disulfide bonds and other types of covalent cross-links.

Functionally, nematode cuticles are composed largely of collagen-like proteins. The cuticle functions both as an exoskeleton and as a barrier to protect the worm from its environment. The protein is Putative cuticle collagen 79 (col-79) of Caenorhabditis elegans.